Reading from the N-terminus, the 310-residue chain is Homoserine kinase (310 aa).

91 to 101 (PIGSGLGSSAC) contributes to the ATP binding site.

This sequence belongs to the GHMP kinase family. Homoserine kinase subfamily.

The protein localises to the cytoplasm. The catalysed reaction is L-homoserine + ATP = O-phospho-L-homoserine + ADP + H(+). It functions in the pathway amino-acid biosynthesis; L-threonine biosynthesis; L-threonine from L-aspartate: step 4/5. Its function is as follows. Catalyzes the ATP-dependent phosphorylation of L-homoserine to L-homoserine phosphate. The polypeptide is Homoserine kinase (Escherichia coli O6:K15:H31 (strain 536 / UPEC)).